We begin with the raw amino-acid sequence, 792 residues long: Xaa-Pro dipeptidyl-peptidase (792 aa).

Catalysis depends on charge relay system residues S363, D482, and H513.

This sequence belongs to the peptidase S15 family. As to quaternary structure, homodimer.

The protein resides in the cytoplasm. The enzyme catalyses Hydrolyzes Xaa-Pro-|- bonds to release unblocked, N-terminal dipeptides from substrates including Ala-Pro-|-p-nitroanilide and (sequentially) Tyr-Pro-|-Phe-Pro-|-Gly-Pro-|-Ile.. In terms of biological role, removes N-terminal dipeptides sequentially from polypeptides having unsubstituted N-termini provided that the penultimate residue is proline. The chain is Xaa-Pro dipeptidyl-peptidase from Lactobacillus delbrueckii subsp. bulgaricus (strain ATCC BAA-365 / Lb-18).